A 440-amino-acid polypeptide reads, in one-letter code: Asparagine--tRNA ligase (440 aa).

It belongs to the class-II aminoacyl-tRNA synthetase family. In terms of assembly, homodimer.

The protein resides in the cytoplasm. It catalyses the reaction tRNA(Asn) + L-asparagine + ATP = L-asparaginyl-tRNA(Asn) + AMP + diphosphate + H(+). In Roseiflexus sp. (strain RS-1), this protein is Asparagine--tRNA ligase.